Reading from the N-terminus, the 243-residue chain is Large ribosomal subunit protein uL3 (243 aa).

Disordered stretches follow at residues 139 to 164 (VSHR…KMPG) and 218 to 243 (KPGK…GEGA). Gln-151 bears the N5-methylglutamine mark. The span at 218 to 229 (KPGKFKLADGGD) shows a compositional bias: basic and acidic residues. Residues 230–243 (KAAAAPEATAGEGA) are compositionally biased toward low complexity.

The protein belongs to the universal ribosomal protein uL3 family. In terms of assembly, part of the 50S ribosomal subunit. Forms a cluster with proteins L14 and L19. In terms of processing, methylated by PrmB.

In terms of biological role, one of the primary rRNA binding proteins, it binds directly near the 3'-end of the 23S rRNA, where it nucleates assembly of the 50S subunit. The chain is Large ribosomal subunit protein uL3 from Afipia carboxidovorans (strain ATCC 49405 / DSM 1227 / KCTC 32145 / OM5) (Oligotropha carboxidovorans).